Here is a 78-residue protein sequence, read N- to C-terminus: Acyl carrier protein (78 aa).

The Carrier domain occupies 1–76 (MSLEERVKEI…DVINYLKEKV (76 aa)). At serine 36 the chain carries O-(pantetheine 4'-phosphoryl)serine.

It belongs to the acyl carrier protein (ACP) family. In terms of processing, 4'-phosphopantetheine is transferred from CoA to a specific serine of apo-ACP by AcpS. This modification is essential for activity because fatty acids are bound in thioester linkage to the sulfhydryl of the prosthetic group.

It localises to the cytoplasm. It functions in the pathway lipid metabolism; fatty acid biosynthesis. In terms of biological role, carrier of the growing fatty acid chain in fatty acid biosynthesis. In Aquifex aeolicus (strain VF5), this protein is Acyl carrier protein.